Here is a 184-residue protein sequence, read N- to C-terminus: MESELGFLVSVVIICADITATVLGIEAEIAQSKAPHHHHQQHSRHSGSGCRRSPSDGAFAEGVAAMVLLFIVHVLANVLGGCTYIRSKQDFKRATANKILAVAFLVLSWIFFVVSYSTLMIGTLANSRTNRLCSLPHRWFFLIGGIFCLGHGVVTSAYYVSAIAAKKEDKENAQQENLANRSRA.

An N-terminal signal peptide occupies residues 1–24 (MESELGFLVSVVIICADITATVLG). Residues 34–45 (APHHHHQQHSRH) are compositionally biased toward basic residues. The segment at 34–53 (APHHHHQQHSRHSGSGCRRS) is disordered. 3 helical membrane-spanning segments follow: residues 62–82 (GVAA…LGGC), 99–119 (ILAV…YSTL), and 140–160 (FFLI…AYYV). N-linked (GlcNAc...) asparagine glycosylation occurs at N180.

This sequence belongs to the DESIGUAL family. As to expression, mainly expressed in roots, inflorescences and developing leaves, and, at low levels, in mature leaves.

It localises to the endoplasmic reticulum membrane. In terms of biological role, involved, partially redundantly with VCC/DEAL1 and DEAL2, to ensure bilateral symmetry development and early leaf margin patterning, probably via the regulation of auxin and CUC2 distribution. The sequence is that of Protein DESIGUAL 3 from Arabidopsis thaliana (Mouse-ear cress).